The following is a 132-amino-acid chain: Protein KRTCAP2 homolog (132 aa).

4 consecutive transmembrane segments (helical) span residues 1-21, 35-55, 69-89, and 92-109; these read MAVPTSVSLVLASVTAVLIFS, MATVFGGFLGSWLFILSLTAV, AKLFPEVAFCLIGSLFACGMV, and VCATTCILFSVAALYYIN.

This sequence belongs to the KRTCAP2 family. As to quaternary structure, component of the oligosaccharyltransferase (OST) complex.

The protein resides in the membrane. Functionally, subunit of the oligosaccharyl transferase (OST) complex that catalyzes the initial transfer of a defined glycan (Glc(3)Man(9)GlcNAc(2) in eukaryotes) from the lipid carrier dolichol-pyrophosphate to an asparagine residue within an Asn-X-Ser/Thr consensus motif in nascent polypeptide chains, the first step in protein N-glycosylation. N-glycosylation occurs cotranslationally and the complex associates with the Sec61 complex at the channel-forming translocon complex that mediates protein translocation across the endoplasmic reticulum (ER). All subunits are required for a maximal enzyme activity. The sequence is that of Protein KRTCAP2 homolog from Aedes aegypti (Yellowfever mosquito).